The primary structure comprises 431 residues: Enolase (431 aa).

(2R)-2-phosphoglycerate is bound at residue Gln-163. Glu-205 functions as the Proton donor in the catalytic mechanism. Mg(2+) contacts are provided by Asp-242, Glu-288, and Asp-315. (2R)-2-phosphoglycerate is bound by residues Lys-340, Arg-369, Ser-370, and Lys-391. The Proton acceptor role is filled by Lys-340.

The protein belongs to the enolase family. It depends on Mg(2+) as a cofactor.

The protein localises to the cytoplasm. It localises to the secreted. Its subcellular location is the cell surface. It carries out the reaction (2R)-2-phosphoglycerate = phosphoenolpyruvate + H2O. It participates in carbohydrate degradation; glycolysis; pyruvate from D-glyceraldehyde 3-phosphate: step 4/5. Catalyzes the reversible conversion of 2-phosphoglycerate (2-PG) into phosphoenolpyruvate (PEP). It is essential for the degradation of carbohydrates via glycolysis. In Bacillus mycoides (strain KBAB4) (Bacillus weihenstephanensis), this protein is Enolase.